We begin with the raw amino-acid sequence, 396 residues long: Decapping nuclease RAI1 (396 aa).

107–109 (YRG) is a binding site for substrate. Glu179 is an a divalent metal cation binding site. A substrate-binding site is contributed by Glu228. A divalent metal cation is bound by residues Asp230, Glu249, and Leu250. Substrate contacts are provided by Lys251 and Gln275.

This sequence belongs to the DXO/Dom3Z family. In terms of assembly, interacts with RAT1; the interaction is direct, stabilizes RAT1 protein structure and stimulates its exoribonuclease activity. The interaction also stimulates RAI1 pyrophosphohydrolase activity, probably by recruiting it to mRNA substrates. Requires a divalent metal cation as cofactor.

Its subcellular location is the nucleus. The catalysed reaction is a 5'-end NAD(+)-phospho-ribonucleoside in mRNA + H2O = a 5'-end phospho-ribonucleoside in mRNA + NAD(+) + H(+). The enzyme catalyses a 5'-end (N(7)-methyl 5'-triphosphoguanosine)-ribonucleoside-ribonucleotide in mRNA + H2O = a (N(7)-methyl 5'-triphosphoguanosine)-nucleoside + a 5'-end phospho-ribonucleoside in mRNA + H(+). It catalyses the reaction a 5'-end triphospho-ribonucleoside in mRNA + H2O = a 5'-end phospho-ribonucleoside in mRNA + diphosphate + H(+). Decapping enzyme for NAD-capped RNAs: specifically hydrolyzes the nicotinamide adenine dinucleotide (NAD) cap from a subset of RNAs by removing the entire NAD moiety from the 5'-end of an NAD-capped RNA. The NAD-cap is present at the 5'-end of some RNAs and snoRNAs. In contrast to the canonical 5'-end N7 methylguanosine (m7G) cap, the NAD cap promotes mRNA decay. Also acts as a non-canonical decapping enzyme that removes the entire cap structure of m7G capped or incompletely capped RNAs. Has decapping activity toward incomplete 5'-end m7G cap mRNAs such as unmethylated 5'-end-capped RNA (cap0), while it has no activity toward 2'-O-ribose methylated m7G cap (cap1). Also possesses RNA 5'-pyrophosphohydrolase activity by hydrolyzing the 5'-end triphosphate to release pyrophosphates. Stimulates exoribonuclease activity of Rat1, allowing it to degrade RNAs with stable secondary structure more effectively. This is Decapping nuclease RAI1 from Scheffersomyces stipitis (strain ATCC 58785 / CBS 6054 / NBRC 10063 / NRRL Y-11545) (Yeast).